A 789-amino-acid chain; its full sequence is Molybdenum cofactor sulfurase (789 aa).

The residue at position 251 (Lys-251) is an N6-(pyridoxal phosphate)lysine. Cys-422 is a catalytic residue. Residues 628–789 (GDQVAQWLDQ…LICGETLEVD (162 aa)) enclose the MOSC domain. A Phosphoserine modification is found at Ser-741.

It belongs to the class-V pyridoxal-phosphate-dependent aminotransferase family. MOCOS subfamily. Requires pyridoxal 5'-phosphate as cofactor.

The enzyme catalyses Mo-molybdopterin + L-cysteine + AH2 = thio-Mo-molybdopterin + L-alanine + A + H2O. It participates in cofactor biosynthesis; molybdopterin biosynthesis. Its function is as follows. Sulfurates the molybdenum cofactor. Sulfation of molybdenum is essential for xanthine dehydrogenase (XDH) and aldehyde oxidase (ADO) enzymes in which molybdenum cofactor is liganded by 1 oxygen and 1 sulfur atom in active form. The polypeptide is Molybdenum cofactor sulfurase (Drosophila willistoni (Fruit fly)).